The chain runs to 72 residues: Protein kish-A (72 aa).

The N-terminal stretch at 1-26 (MSAIFNFQSLLTVILLLICTCAYIRS) is a signal peptide. Topologically, residues 27-53 (LAPSLLDKNKTGLLGIFWKCARIGERK) are extracellular. Asn-35 is a glycosylation site (N-linked (GlcNAc...) asparagine). A helical transmembrane segment spans residues 54–71 (SPYVAVCCVVMAFSILFV). A topological domain (cytoplasmic) is located at residue Gln-72.

This sequence belongs to the KISH family.

It is found in the golgi apparatus membrane. Its function is as follows. Involved in the early part of the secretory pathway. In Gallus gallus (Chicken), this protein is Protein kish-A (TMEM167A).